A 156-amino-acid polypeptide reads, in one-letter code: Regulatory protein RecX (156 aa).

The protein belongs to the RecX family.

It is found in the cytoplasm. In terms of biological role, modulates RecA activity. The sequence is that of Regulatory protein RecX from Pseudomonas putida (strain ATCC 47054 / DSM 6125 / CFBP 8728 / NCIMB 11950 / KT2440).